A 496-amino-acid chain; its full sequence is Nectin 1a (496 aa).

The N-terminal stretch at 1 to 20 (MMFINLLLRLMCVFLIGADG) is a signal peptide. At 21-349 (QMVQMESSKA…FQDQQQAGVV (329 aa)) the chain is on the extracellular side. One can recognise an Ig-like V-type domain in the interval 34–138 (GSQVELPCQF…GNRENMVNLT (105 aa)). Cysteine 41 and cysteine 121 are oxidised to a cystine. N-linked (GlcNAc...) asparagine glycosylation is found at asparagine 62 and asparagine 136. Ig-like C2-type domains lie at 143–238 (PMIQ…VTLN) and 243–330 (PEVI…VIVT). 2 disulfide bridges follow: cysteine 168-cysteine 222 and cysteine 265-cysteine 312. Asparagine 282 is a glycosylation site (N-linked (GlcNAc...) asparagine). The chain crosses the membrane as a helical span at residues 350-370 (IGGAVVCGTVLLAAVTLLVVF). Topologically, residues 371–496 (LYRRRCMFKG…SVISKEEWYV (126 aa)) are cytoplasmic.

Belongs to the nectin family. Cis- and trans-homodimer. Can form trans-heterodimers. As to expression, expressed in the developing eye and nervous system.

It is found in the cell membrane. The protein localises to the cell junction. It localises to the adherens junction. In terms of biological role, cell adhesion molecule that promotes cell-cell contacts and plays important roles in the development of the nervous system. Acts by forming homophilic or heterophilic trans-dimers. The chain is Nectin 1a from Danio rerio (Zebrafish).